We begin with the raw amino-acid sequence, 699 residues long: Elongation factor G (699 aa).

The tr-type G domain occupies 8–283; sequence EHIRNIGICA…AVVDFLPSPI (276 aa). Residues 17 to 24, 81 to 85, and 135 to 138 contribute to the GTP site; these read AHIDAGKT, DTPGH, and NKMD.

Belongs to the TRAFAC class translation factor GTPase superfamily. Classic translation factor GTPase family. EF-G/EF-2 subfamily.

It localises to the cytoplasm. Functionally, catalyzes the GTP-dependent ribosomal translocation step during translation elongation. During this step, the ribosome changes from the pre-translocational (PRE) to the post-translocational (POST) state as the newly formed A-site-bound peptidyl-tRNA and P-site-bound deacylated tRNA move to the P and E sites, respectively. Catalyzes the coordinated movement of the two tRNA molecules, the mRNA and conformational changes in the ribosome. In Rickettsia rickettsii (strain Iowa), this protein is Elongation factor G.